A 1108-amino-acid chain; its full sequence is Mediator of RNA polymerase II transcription subunit 14 (1108 aa).

Disordered regions lie at residues 1–30 (MAAV…GGDT), 35–54 (SSEI…DNPL), and 1048–1108 (QQQR…VDLT). Over residues 35 to 52 (SSEIVQQQTPARSLQSDN) the composition is skewed to polar residues. The span at 1048–1080 (QQQRQPVVQPGQQPQVQNQANGVMNRGPQRPGL) shows a compositional bias: low complexity.

It belongs to the Mediator complex subunit 14 family. Component of the Mediator complex.

It is found in the nucleus. In terms of biological role, component of the Mediator complex, a coactivator involved in the regulated transcription of nearly all RNA polymerase II-dependent genes. Mediator functions as a bridge to convey information from gene-specific regulatory proteins to the basal RNA polymerase II transcription machinery. Mediator is recruited to promoters by direct interactions with regulatory proteins and serves as a scaffold for the assembly of a functional preinitiation complex with RNA polymerase II and the general transcription factors. In Pyricularia oryzae (strain 70-15 / ATCC MYA-4617 / FGSC 8958) (Rice blast fungus), this protein is Mediator of RNA polymerase II transcription subunit 14 (RGR1).